The following is a 94-amino-acid chain: Phosphoribosyl-ATP pyrophosphatase (94 aa).

Belongs to the PRA-PH family.

Its subcellular location is the cytoplasm. The enzyme catalyses 1-(5-phospho-beta-D-ribosyl)-ATP + H2O = 1-(5-phospho-beta-D-ribosyl)-5'-AMP + diphosphate + H(+). The protein operates within amino-acid biosynthesis; L-histidine biosynthesis; L-histidine from 5-phospho-alpha-D-ribose 1-diphosphate: step 2/9. The chain is Phosphoribosyl-ATP pyrophosphatase from Pyrobaculum islandicum (strain DSM 4184 / JCM 9189 / GEO3).